Here is a 387-residue protein sequence, read N- to C-terminus: 1-deoxy-D-xylulose 5-phosphate reductoisomerase (387 aa).

Positions 10, 11, 13, 38, and 122 each coordinate NADPH. Position 123 (Lys-123) interacts with 1-deoxy-D-xylulose 5-phosphate. Glu-124 is an NADPH binding site. Position 148 (Asp-148) interacts with Mn(2+). Residues Ser-149, Glu-150, Ser-174, and His-197 each coordinate 1-deoxy-D-xylulose 5-phosphate. Glu-150 is a Mn(2+) binding site. NADPH is bound at residue Gly-203. The 1-deoxy-D-xylulose 5-phosphate site is built by Ser-210, Asn-215, Lys-216, and Glu-219. Glu-219 contacts Mn(2+).

This sequence belongs to the DXR family. Mg(2+) serves as cofactor. The cofactor is Mn(2+).

It carries out the reaction 2-C-methyl-D-erythritol 4-phosphate + NADP(+) = 1-deoxy-D-xylulose 5-phosphate + NADPH + H(+). The protein operates within isoprenoid biosynthesis; isopentenyl diphosphate biosynthesis via DXP pathway; isopentenyl diphosphate from 1-deoxy-D-xylulose 5-phosphate: step 1/6. Functionally, catalyzes the NADPH-dependent rearrangement and reduction of 1-deoxy-D-xylulose-5-phosphate (DXP) to 2-C-methyl-D-erythritol 4-phosphate (MEP). This is 1-deoxy-D-xylulose 5-phosphate reductoisomerase from Ehrlichia canis (strain Jake).